The primary structure comprises 1000 residues: C2 domain-containing protein 5 (1000 aa).

The C2 domain maps to 1 to 109 (MPGKLKVKIV…EAATVISGWF (109 aa)). 6 residues coordinate Ca(2+): aspartate 19, aspartate 26, aspartate 76, aspartate 78, serine 81, and aspartate 84. Residue serine 197 is modified to Phosphoserine; by PKB/AKT2. 2 positions are modified to phosphoserine: serine 200 and serine 260. Residues 265 to 330 (MKEIPFNEDP…SGSAGKEGGP (66 aa)) are disordered. Positions 274–289 (PNPNTHSSGPSTPLKN) are enriched in polar residues. Residues 290–318 (QTYSFSPSKSYSRQSSSSDTDLSLTPKTG) are compositionally biased toward low complexity. 5 positions are modified to phosphoserine: serine 293, serine 295, serine 304, serine 305, and serine 306. Position 317 is a phosphothreonine (threonine 317). A compositionally biased stretch (gly residues) spans 319-328 (MGSGSAGKEG). The residue at position 323 (serine 323) is a Phosphoserine. Phosphothreonine is present on threonine 601. The segment at 639-669 (EIIGSPIPEPRQRSRLLRSQSESSDEVTELD) is disordered. Phosphoserine occurs at positions 643, 657, 659, 661, and 662. Phosphothreonine is present on threonine 666. Position 671 is a phosphoserine (serine 671). The residue at position 807 (threonine 807) is a Phosphothreonine. 2 positions are modified to phosphoserine: serine 817 and serine 852.

It depends on Ca(2+) as a cofactor. Phosphorylated on Ser-197 by active myristoylated kinase AKT2; insulin-stimulated phosphorylation by AKT2 regulates SLC2A4/GLUT4 translocation into the plasma membrane.

Its subcellular location is the cytoplasmic vesicle membrane. It localises to the cytoplasm. The protein resides in the cell cortex. It is found in the cell membrane. The protein localises to the cell projection. Its subcellular location is the ruffle. Functionally, required for insulin-stimulated glucose transport and glucose transporter SLC2A4/GLUT4 translocation from intracellular glucose storage vesicle (GSV) to the plasma membrane (PM) in adipocytes. Binds phospholipid membranes in a calcium-dependent manner and is necessary for the optimal membrane fusion between SLC2A4/GLUT4 GSV and the PM. This chain is C2 domain-containing protein 5 (C2CD5), found in Homo sapiens (Human).